The sequence spans 379 residues: UPF0450 protein C17orf58 homolog (379 aa).

The first 17 residues, 1–17 (MIPALTVPLLFLCATSA), serve as a signal peptide directing secretion. Disordered stretches follow at residues 76–95 (RTRA…PDKT) and 162–194 (TASQ…MNPH). The span at 180–194 (SMDHESNRPGKMNPH) shows a compositional bias: basic and acidic residues. 3 cysteine pairs are disulfide-bonded: C234–C308, C238–C312, and C249–C378. In terms of domain architecture, NTR spans 234 to 378 (CIAECHRDKD…KVLAAAHSKC (145 aa)).

The protein belongs to the UPF0450 family.

In Xenopus laevis (African clawed frog), this protein is UPF0450 protein C17orf58 homolog.